The following is a 274-amino-acid chain: Undecaprenyl-diphosphatase (274 aa).

A run of 8 helical transmembrane segments spans residues 6–26, 45–65, 94–114, 117–137, 155–174, 191–211, 223–243, and 253–273; these read SLFI…LPVS, AKTF…VMFW, GHIL…HDVI, LFAP…LLAA, YRQA…PGFS, YAAA…ASGL, GDLP…LIAI, and ISFV…YMVF.

This sequence belongs to the UppP family.

Its subcellular location is the cell inner membrane. The catalysed reaction is di-trans,octa-cis-undecaprenyl diphosphate + H2O = di-trans,octa-cis-undecaprenyl phosphate + phosphate + H(+). Its function is as follows. Catalyzes the dephosphorylation of undecaprenyl diphosphate (UPP). Confers resistance to bacitracin. This is Undecaprenyl-diphosphatase from Serratia proteamaculans (strain 568).